The sequence spans 119 residues: Large ribosomal subunit protein uL18 (119 aa).

The protein belongs to the universal ribosomal protein uL18 family. In terms of assembly, part of the 50S ribosomal subunit; part of the 5S rRNA/L5/L18/L25 subcomplex. Contacts the 5S and 23S rRNAs.

Its function is as follows. This is one of the proteins that bind and probably mediate the attachment of the 5S RNA into the large ribosomal subunit, where it forms part of the central protuberance. This is Large ribosomal subunit protein uL18 from Clostridium perfringens (strain 13 / Type A).